A 378-amino-acid chain; its full sequence is Branched-chain-amino-acid aminotransferase (378 aa).

Lys213 carries the N6-(pyridoxal phosphate)lysine modification.

Belongs to the class-IV pyridoxal-phosphate-dependent aminotransferase family. In terms of assembly, homodimer. The cofactor is pyridoxal 5'-phosphate.

The catalysed reaction is L-leucine + 2-oxoglutarate = 4-methyl-2-oxopentanoate + L-glutamate. It carries out the reaction L-isoleucine + 2-oxoglutarate = (S)-3-methyl-2-oxopentanoate + L-glutamate. The enzyme catalyses L-valine + 2-oxoglutarate = 3-methyl-2-oxobutanoate + L-glutamate. Catalyzes the first reaction in the catabolism of the essential branched chain amino acids leucine, isoleucine, and valine. This Dictyostelium discoideum (Social amoeba) protein is Branched-chain-amino-acid aminotransferase (bcaA).